Reading from the N-terminus, the 321-residue chain is tRNA(Ile)-lysidine synthase (321 aa).

21–26 (SYGSDS) is an ATP binding site.

This sequence belongs to the tRNA(Ile)-lysidine synthase family.

The protein resides in the cytoplasm. The catalysed reaction is cytidine(34) in tRNA(Ile2) + L-lysine + ATP = lysidine(34) in tRNA(Ile2) + AMP + diphosphate + H(+). Functionally, ligates lysine onto the cytidine present at position 34 of the AUA codon-specific tRNA(Ile) that contains the anticodon CAU, in an ATP-dependent manner. Cytidine is converted to lysidine, thus changing the amino acid specificity of the tRNA from methionine to isoleucine. The protein is tRNA(Ile)-lysidine synthase of Campylobacter jejuni subsp. jejuni serotype O:2 (strain ATCC 700819 / NCTC 11168).